Reading from the N-terminus, the 313-residue chain is Peroxidase 57 (313 aa).

An N-terminal signal peptide occupies residues 1 to 22 (MMKGAKFSSLLVLFFIFPIAFA). 4 cysteine pairs are disulfide-bonded: C33-C109, C66-C71, C115-C309, and C192-C224. H64 serves as the catalytic Proton acceptor. The Ca(2+) site is built by D65, V68, G70, D72, and S74. P155 provides a ligand contact to substrate. H185 provides a ligand contact to heme b. T186 is a Ca(2+) binding site. D233, S236, and D241 together coordinate Ca(2+).

This sequence belongs to the peroxidase family. Classical plant (class III) peroxidase subfamily. The cofactor is heme b. It depends on Ca(2+) as a cofactor. Mainly expressed in roots.

The protein resides in the secreted. It catalyses the reaction 2 a phenolic donor + H2O2 = 2 a phenolic radical donor + 2 H2O. Removal of H(2)O(2), oxidation of toxic reductants, biosynthesis and degradation of lignin, suberization, auxin catabolism, response to environmental stresses such as wounding, pathogen attack and oxidative stress. These functions might be dependent on each isozyme/isoform in each plant tissue. The chain is Peroxidase 57 (PER57) from Arabidopsis thaliana (Mouse-ear cress).